The chain runs to 62 residues: Non-structural protein 3a (62 aa).

The polypeptide is Non-structural protein 3a (Porcine transmissible gastroenteritis coronavirus (strain FS772/70) (TGEV)).